Here is a 262-residue protein sequence, read N- to C-terminus: 5'-nucleotidase SurE (262 aa).

A divalent metal cation-binding residues include D11, D12, S43, and N101. The segment covering 220–229 (SAGDGPKEWP) has biased composition (basic and acidic residues). Residues 220-246 (SAGDGPKEWPSDVSQIETNSPSLTPIQ) form a disordered region. Over residues 231-244 (DVSQIETNSPSLTP) the composition is skewed to polar residues.

The protein belongs to the SurE nucleotidase family. A divalent metal cation is required as a cofactor.

It localises to the cytoplasm. It carries out the reaction a ribonucleoside 5'-phosphate + H2O = a ribonucleoside + phosphate. In terms of biological role, nucleotidase that shows phosphatase activity on nucleoside 5'-monophosphates. The protein is 5'-nucleotidase SurE of Prochlorococcus marinus (strain SARG / CCMP1375 / SS120).